A 180-amino-acid chain; its full sequence is Hypoxanthine-guanine phosphoribosyltransferase (180 aa).

Residues Lys-43 and Gly-44 each coordinate diphosphate. 2 residues coordinate Mg(2+): Glu-99 and Asp-100. The active-site Proton acceptor is the Asp-103. Residues Lys-131, 152 to 153 (FI), and Asp-159 each bind GMP. Diphosphate is bound at residue Arg-165.

It belongs to the purine/pyrimidine phosphoribosyltransferase family. Mg(2+) is required as a cofactor.

It localises to the cytoplasm. The catalysed reaction is IMP + diphosphate = hypoxanthine + 5-phospho-alpha-D-ribose 1-diphosphate. It catalyses the reaction GMP + diphosphate = guanine + 5-phospho-alpha-D-ribose 1-diphosphate. Its pathway is purine metabolism; IMP biosynthesis via salvage pathway; IMP from hypoxanthine: step 1/1. It participates in purine metabolism; GMP biosynthesis via salvage pathway; GMP from guanine: step 1/1. In terms of biological role, purine salvage pathway enzyme that catalyzes the transfer of the ribosyl-5-phosphate group from 5-phospho-alpha-D-ribose 1-diphosphate (PRPP) to the N9 position of the 6-oxopurines hypoxanthine and guanine to form the corresponding ribonucleotides IMP (inosine 5'-monophosphate) and GMP (guanosine 5'-monophosphate), with the release of PPi. The polypeptide is Hypoxanthine-guanine phosphoribosyltransferase (hpt) (Streptococcus pyogenes serotype M3 (strain ATCC BAA-595 / MGAS315)).